The following is a 314-amino-acid chain: Ribosomal protein L11 methyltransferase (314 aa).

Threonine 163, glycine 184, aspartate 206, and asparagine 248 together coordinate S-adenosyl-L-methionine.

It belongs to the methyltransferase superfamily. PrmA family.

The protein resides in the cytoplasm. The enzyme catalyses L-lysyl-[protein] + 3 S-adenosyl-L-methionine = N(6),N(6),N(6)-trimethyl-L-lysyl-[protein] + 3 S-adenosyl-L-homocysteine + 3 H(+). Functionally, methylates ribosomal protein L11. This chain is Ribosomal protein L11 methyltransferase, found in Lactobacillus delbrueckii subsp. bulgaricus (strain ATCC BAA-365 / Lb-18).